The sequence spans 843 residues: Respiratory burst oxidase homolog protein B (843 aa).

Acidic residues predominate over residues 1 to 10; it reads MREEEMESSS. Residues 1 to 27 form a disordered region; it reads MREEEMESSSEGETNKISRCKATGSDN. At 1–297 the chain is on the cytoplasmic side; sequence MREEEMESSS…SYFFLENWKR (297 aa). EF-hand-like stretches follow at residues 114–122 and 148–159; these read AVEGKLPKS and RGTTSSSITKTE. EF-hand domains are found at residues 171-206 and 215-250; these read SFDD…SASA and NVDE…VPSQ. Ca(2+) is bound by residues aspartate 184, asparagine 186, aspartate 188, arginine 190, and glutamate 195. Position 268 is a phosphoserine (serine 268). The chain crosses the membrane as a helical span at residues 298–318; that stretch reads IWVLTLWISICITLFTWKFLQ. At 319–383 the chain is on the extracellular side; sequence YKRKTVFEVM…FDDNINFHKV (65 aa). One can recognise a Ferric oxidoreductase domain in the interval 336-495; that stretch reads KGSAETLKFN…LFVIVYVLLI (160 aa). The helical transmembrane segment at 384–404 threads the bilayer; sequence VAFGIAVGIGLHAISHLACDF. The Cytoplasmic portion of the chain corresponds to 405–439; the sequence is PRLLHAKNVEFEPMKKFFGDERPENYGWFMKGTDG. A helical membrane pass occupies residues 440–460; it reads WTGVTMVVLMLVAYVLAQSWF. The Extracellular segment spans residues 461–482; it reads RRNRANLPKSLKRLTGFNAFWY. The helical transmembrane segment at 483–503 threads the bilayer; that stretch reads SHHLFVIVYVLLIVHGYFVYL. The Cytoplasmic segment spans residues 504–511; it reads SKEWYHKT. Residues 512–529 traverse the membrane as a helical segment; it reads TWMYLAVPVLLYAFERLI. Residues 530-659 are Extracellular-facing; the sequence is RAFRPGAKAV…PYGAPAQDYR (130 aa). In terms of domain architecture, FAD-binding FR-type spans 534-657; sequence PGAKAVKVLK…DGPYGAPAQD (124 aa). Residues 660-680 traverse the membrane as a helical segment; that stretch reads NYDVLLLVGLGIGATPLISII. The Cytoplasmic portion of the chain corresponds to 681 to 843; that stretch reads RDVLNNIKNQ…TKFEFHKENF (163 aa).

Belongs to the RBOH (TC 5.B.1.3) family. As to quaternary structure, monomer and homodimer.

The protein localises to the membrane. In terms of biological role, calcium-dependent NADPH oxidase that generates superoxide. The chain is Respiratory burst oxidase homolog protein B (RBOHB) from Arabidopsis thaliana (Mouse-ear cress).